The sequence spans 329 residues: Beta-ketoacyl-[acyl-carrier-protein] synthase III (329 aa).

Catalysis depends on residues C113 and H255. Residues 256–260 are ACP-binding; sequence QANQR. The active site involves N285.

The protein belongs to the thiolase-like superfamily. FabH family. In terms of assembly, homodimer.

It is found in the cytoplasm. The catalysed reaction is malonyl-[ACP] + acetyl-CoA + H(+) = 3-oxobutanoyl-[ACP] + CO2 + CoA. It participates in lipid metabolism; fatty acid biosynthesis. Its function is as follows. Catalyzes the condensation reaction of fatty acid synthesis by the addition to an acyl acceptor of two carbons from malonyl-ACP. Catalyzes the first condensation reaction which initiates fatty acid synthesis and may therefore play a role in governing the total rate of fatty acid production. Possesses both acetoacetyl-ACP synthase and acetyl transacylase activities. Its substrate specificity determines the biosynthesis of branched-chain and/or straight-chain of fatty acids. This is Beta-ketoacyl-[acyl-carrier-protein] synthase III from Chlorobium luteolum (strain DSM 273 / BCRC 81028 / 2530) (Pelodictyon luteolum).